Reading from the N-terminus, the 759-residue chain is DNA replication licensing factor mcm-5 (759 aa).

Residues 330 to 536 (AYELIAKSIA…KDATLAKHVI (207 aa)) enclose the MCM domain. Arg-370 contributes to the ADP binding site. Positions 511–514 (SRFD) match the Arginine finger motif.

Belongs to the MCM family. In terms of assembly, component of the mcm2-7 complex. The complex forms a toroidal hexameric ring with the proposed subunit order mcm2-mcm6-mcm4-mcm7-mcm3-mcm5 (By simililarity).

The protein resides in the nucleus. The protein localises to the cytoplasm. Its subcellular location is the cytosol. The catalysed reaction is ATP + H2O = ADP + phosphate + H(+). Its function is as follows. Acts as a component of the MCM2-7 complex (MCM complex) which is the replicative helicase essential for 'once per cell cycle' DNA replication initiation and elongation in eukaryotic cells. Core component of CDC45-MCM-GINS (CMG) helicase, the molecular machine that unwinds template DNA during replication, and around which the replisome is built. The active ATPase sites in the MCM2-7 ring are formed through the interaction surfaces of two neighboring subunits such that a critical structure of a conserved arginine finger motif is provided in trans relative to the ATP-binding site of the Walker A box of the adjacent subunit. The six ATPase active sites, however, are likely to contribute differentially to the complex helicase activity. The protein is DNA replication licensing factor mcm-5 (mcm-5) of Caenorhabditis elegans.